Reading from the N-terminus, the 760-residue chain is Molybdenum cofactor sulfurase 2 (760 aa).

An N6-(pyridoxal phosphate)lysine modification is found at Lys223. The active site involves Cys389. Positions 608–758 (QSDDEARTLR…LHCGSPLQVV (151 aa)) constitute an MOSC domain.

The protein belongs to the class-V pyridoxal-phosphate-dependent aminotransferase family. MOCOS subfamily. Pyridoxal 5'-phosphate serves as cofactor.

It carries out the reaction Mo-molybdopterin + L-cysteine + AH2 = thio-Mo-molybdopterin + L-alanine + A + H2O. Functionally, sulfurates the molybdenum cofactor. Sulfation of molybdenum is essential for xanthine dehydrogenase (XDH) and aldehyde oxidase (ADO) enzymes in which molybdenum cofactor is liganded by 1 oxygen and 1 sulfur atom in active form. This chain is Molybdenum cofactor sulfurase 2, found in Culex quinquefasciatus (Southern house mosquito).